Here is a 309-residue protein sequence, read N- to C-terminus: Aspartate carbamoyltransferase catalytic subunit (309 aa).

Carbamoyl phosphate-binding residues include Arg-59 and Thr-60. An L-aspartate-binding site is contributed by Lys-87. Carbamoyl phosphate-binding residues include Arg-109, His-139, and Gln-142. L-aspartate-binding residues include Arg-172 and Arg-224. Positions 265 and 266 each coordinate carbamoyl phosphate.

The protein belongs to the aspartate/ornithine carbamoyltransferase superfamily. ATCase family. As to quaternary structure, heterododecamer (2C3:3R2) of six catalytic PyrB chains organized as two trimers (C3), and six regulatory PyrI chains organized as three dimers (R2).

The enzyme catalyses carbamoyl phosphate + L-aspartate = N-carbamoyl-L-aspartate + phosphate + H(+). It functions in the pathway pyrimidine metabolism; UMP biosynthesis via de novo pathway; (S)-dihydroorotate from bicarbonate: step 2/3. In terms of biological role, catalyzes the condensation of carbamoyl phosphate and aspartate to form carbamoyl aspartate and inorganic phosphate, the committed step in the de novo pyrimidine nucleotide biosynthesis pathway. The protein is Aspartate carbamoyltransferase catalytic subunit of Streptococcus uberis (strain ATCC BAA-854 / 0140J).